Reading from the N-terminus, the 387-residue chain is Erythronate-4-phosphate dehydrogenase (387 aa).

Positions 45 and 67 each coordinate substrate. An NAD(+)-binding site is contributed by Asp-147. Arg-208 is an active-site residue. Asp-232 contacts NAD(+). Residue Glu-237 is part of the active site. The Proton donor role is filled by His-254. Residue Gly-257 coordinates NAD(+). Tyr-258 is a binding site for substrate.

Belongs to the D-isomer specific 2-hydroxyacid dehydrogenase family. PdxB subfamily. Homodimer.

It localises to the cytoplasm. It catalyses the reaction 4-phospho-D-erythronate + NAD(+) = (R)-3-hydroxy-2-oxo-4-phosphooxybutanoate + NADH + H(+). The protein operates within cofactor biosynthesis; pyridoxine 5'-phosphate biosynthesis; pyridoxine 5'-phosphate from D-erythrose 4-phosphate: step 2/5. In terms of biological role, catalyzes the oxidation of erythronate-4-phosphate to 3-hydroxy-2-oxo-4-phosphonooxybutanoate. This is Erythronate-4-phosphate dehydrogenase from Shewanella sediminis (strain HAW-EB3).